Reading from the N-terminus, the 332-residue chain is MLRDVLTLSRHVLQQFGSFTAEAQDFSALMNRIALAGKMIARRLSQAGLIEGALGVTGSLNVQGEEQQQMDDYANRAFIRALEQTGLVCRLVSEEMKTPARLPENCSLSRLALMIDPLDGSSNIDANLSVGSIFSVLHPLEDRPEADNQDLLQPGRRQLAAGYILYGPSTQLVYSVGKGVHGFTLDPSLGEFILSRSDIRIPERGSVYSLNEGYFCQWSEGIQNYVRYVHRRDGYISRYSGALVADFHRILLQGGVYLYPGTQKKPEGKLRLMYEANPLAFLAEQAGGAATTGTEAILDIVPQSLHQRVPLIIGSRENVEEVLRCLEGSLVP.

Glutamate 94, aspartate 116, leucine 118, and aspartate 119 together coordinate Mg(2+). Substrate is bound by residues 119-122 (DGSS), asparagine 211, tyrosine 239, 257-259 (YLY), and lysine 269. Residue glutamate 275 coordinates Mg(2+).

Belongs to the FBPase class 1 family. Homotetramer. The cofactor is Mg(2+).

The protein resides in the cytoplasm. It catalyses the reaction beta-D-fructose 1,6-bisphosphate + H2O = beta-D-fructose 6-phosphate + phosphate. It participates in carbohydrate biosynthesis; Calvin cycle. This chain is Fructose-1,6-bisphosphatase class 1, found in Synechococcus sp. (strain JA-2-3B'a(2-13)) (Cyanobacteria bacterium Yellowstone B-Prime).